A 277-amino-acid chain; its full sequence is Glycerol-3-phosphate acyltransferase (277 aa).

Helical transmembrane passes span 3–23 (LFIF…AIIV), 55–75 (IMVM…AKLL), 79–99 (PVTV…PVFF), 111–131 (IGAL…TWLL), and 155–175 (LILV…ILVL). The segment at 207 to 277 (SPATSAEQEF…PKTKTVKEKE (71 aa)) is disordered. Over residues 216-239 (FPGKEVIDTNIDETEKTEQAEAVK) the composition is skewed to basic and acidic residues. 2 stretches are compositionally biased toward basic residues: residues 240 to 253 (KPKV…AKKT) and 262 to 271 (KPKSTKPKTK).

This sequence belongs to the PlsY family. Probably interacts with PlsX.

It localises to the cell inner membrane. The enzyme catalyses an acyl phosphate + sn-glycerol 3-phosphate = a 1-acyl-sn-glycero-3-phosphate + phosphate. The protein operates within lipid metabolism; phospholipid metabolism. Its function is as follows. Catalyzes the transfer of an acyl group from acyl-phosphate (acyl-PO(4)) to glycerol-3-phosphate (G3P) to form lysophosphatidic acid (LPA). This enzyme utilizes acyl-phosphate as fatty acyl donor, but not acyl-CoA or acyl-ACP. This Legionella pneumophila (strain Corby) protein is Glycerol-3-phosphate acyltransferase.